Here is a 371-residue protein sequence, read N- to C-terminus: Trans-enoyl reductase mycC (371 aa).

Residue 51 to 54 (CDWK) participates in NADP(+) binding. 140 to 147 (CVVGTVGL) provides a ligand contact to substrate. NADP(+) contacts are provided by residues 182–185 (STAS), 205–208 (SPAN), tyrosine 223, and 270–271 (FE). Residue 291 to 295 (GIRLL) participates in substrate binding. Position 361-362 (361-362 (VS)) interacts with NADP(+).

It belongs to the zinc-containing alcohol dehydrogenase family. In terms of assembly, monomer.

The catalysed reaction is L-leucine + 8 malonyl-CoA + 4 S-adenosyl-L-methionine + ATP + 9 NADPH + 12 H(+) = (5S)-5-(2-methylpropyl)-3-[(2E,6R,8E,10E,12E)-6,8,10,12-tetramethyltetradeca-2,8,10,12-tetraenoyl]-2,5-dihydro-1H-pyrrol-2-one + AMP + 4 S-adenosyl-L-homocysteine + 8 CO2 + diphosphate + 9 NADP(+) + 8 CoA + 7 H2O. It participates in mycotoxin biosynthesis. Trans-enoyl reductase; part of the gene cluster that mediates the biosynthesis of myceliothermophins, mycotoxins that contain a trans-fused decalin ring system connected to a conjugated 3-pyrrolin-2-one moiety and that have potential anti-tumor properties. The polyketide synthase module (PKS) of the PKS-NRPS mycA is responsible for the synthesis of the octaketide backbone. The downstream nonribosomal peptide synthetase (NRPS) module then amidates the carboxyl end of the octaketide with a leucine. A reductase-like domain (R) at the C-terminus catalyzes the reductive release of the polyketide-amino acid intermediate. Because mycA lacks a designated enoylreductase (ER) domain, the required activity is provided the enoyl reductase mycC. Following mycA-catalyzed construction and release of aminoacyl polyketide aldehyde, Knoevenagel condensation yields the expected ketone. This C18 keto acyclic precursor is the substrate of the Diels-Alderase mycB, that catalyzes the Diels-Alder cycloaddition to produce myceliothermophin E. A yet unknown oxygenase involved in the production of myceliothermophin A, via substitution with a hydroxyl group at the C21, has still to be identified. The sequence is that of Trans-enoyl reductase mycC from Thermothelomyces thermophilus (strain ATCC 42464 / BCRC 31852 / DSM 1799) (Sporotrichum thermophile).